Reading from the N-terminus, the 879-residue chain is Metabotropic glutamate receptor 3 (879 aa).

Residues 1–22 (MKMLTRLQVLTLALFSKGFLLS) form the signal peptide. The Extracellular segment spans residues 23-576 (LGDHNFLRRE…EDYIRWEDAW (554 aa)). Cys-57 and Cys-99 form a disulfide bridge. Residues Ser-151 and 172–174 (AST) each bind L-glutamate. A glycan (N-linked (GlcNAc...) asparagine) is linked at Asn-209. An L-glutamate-binding site is contributed by Tyr-222. Disulfide bonds link Cys-240–Cys-527, Cys-361–Cys-373, Cys-412–Cys-419, Cys-509–Cys-528, Cys-513–Cys-531, Cys-534–Cys-546, and Cys-549–Cys-562. Asn-292 carries an N-linked (GlcNAc...) asparagine glycan. An L-glutamate-binding site is contributed by Asp-301. L-glutamate is bound at residue Lys-389. Residues Asn-414 and Asn-439 are each glycosylated (N-linked (GlcNAc...) asparagine). The helical transmembrane segment at 577-599 (VIGPVTIACLGFMCTCMVVTVFI) threads the bilayer. Topologically, residues 600–613 (KHNNTPLVKASGRE) are cytoplasmic. Residues 614 to 634 (LCYILLFGVGLSYCMTFFFIA) form a helical membrane-spanning segment. At 635-645 (KPSPVICALRR) the chain is on the extracellular side. Residues 646–664 (LGLGSSFAICYSALLTKTN) form a helical membrane-spanning segment. At 665–688 (CIARIFDGVKNGAQRPKFISPSSQ) the chain is on the cytoplasmic side. The helical transmembrane segment at 689–709 (VFICLGLILVQIVMVSVWLIL) threads the bilayer. Residues 710-734 (EAPGTRRYTLAEKRETVILKCNVKD) lie on the Extracellular side of the membrane. Residues 735–756 (SSMLISLTYDVILVILCTVYAF) form a helical membrane-spanning segment. Residues 757 to 769 (KTRKCPENFNEAK) are Cytoplasmic-facing. The chain crosses the membrane as a helical span at residues 770–792 (FIGFTMYTTCIIWLAFLPIFYVT). At 793 to 802 (SSDYRVQTTT) the chain is on the extracellular side. Residues 803 to 828 (MCISVSLSGFVVLGCLFAPKVHIILF) traverse the membrane as a helical segment. The Cytoplasmic portion of the chain corresponds to 829–879 (QPQKNVVTHRLHLNRFSVSGTGTTYSQSSASTYVPTVCNGREVLDSTTSSL).

It belongs to the G-protein coupled receptor 3 family. In terms of assembly, interacts with TAMALIN.

Its subcellular location is the cell membrane. In terms of biological role, G-protein coupled receptor for glutamate. Ligand binding causes a conformation change that triggers signaling via guanine nucleotide-binding proteins (G proteins) and modulates the activity of down-stream effectors. Signaling inhibits adenylate cyclase activity. The sequence is that of Metabotropic glutamate receptor 3 (GRM3) from Pongo abelii (Sumatran orangutan).